Reading from the N-terminus, the 169-residue chain is Secreted LysM effector Blys5 (169 aa).

The first 19 residues, 1–19, serve as a signal peptide directing secretion; sequence MKLSVISAVFVSLAAAAAA. LysM domains follow at residues 47-94 and 121-167; these read TYYQ…YYCV and QWYK…NVCV.

This sequence belongs to the secreted LysM effector family.

Functionally, secreted effector that enables the plant pathogenic fungus to manipulate host defenses for successful infection. Required for the full virulence to infect insect hosts. Protects fungal hyphae against the hydrolytic activity of chitinase and plays an important role in evasion of insect immunities. Binds chitin and can additionally bind chitosan and cellulose. Coats and protects the cell walls of insect pathogens from host cell recognition and additionally shields fungal cells from the hydrolysis of insect chitinases. This is Secreted LysM effector Blys5 from Beauveria bassiana (strain ARSEF 2860) (White muscardine disease fungus).